Reading from the N-terminus, the 261-residue chain is Small ribosomal subunit protein uS2 (261 aa).

At Ser2 the chain carries N-acetylserine. The segment at 212-261 is disordered; it reads QNAAEEAKAEETEEAPAAEAETEWTGETDDVDWADSGATPAAEDAAASNW. The span at 222-244 shows a compositional bias: acidic residues; sequence ETEEAPAAEAETEWTGETDDVDW.

This sequence belongs to the universal ribosomal protein uS2 family. In terms of assembly, component of the small ribosomal subunit. Mature ribosomes consist of a small (40S) and a large (60S) subunit. The 40S subunit contains about 33 different proteins and 1 molecule of RNA (18S). The 60S subunit contains about 49 different proteins and 3 molecules of RNA (25S, 5.8S and 5S). Interacts with RPS21.

The protein resides in the cytoplasm. Functionally, required for the assembly and/or stability of the 40S ribosomal subunit. Required for the processing of the 20S rRNA-precursor to mature 18S rRNA in a late step of the maturation of 40S ribosomal subunits. In Candida tropicalis (Yeast), this protein is Small ribosomal subunit protein uS2.